The following is a 245-amino-acid chain: Probable GTP-binding protein EngB (245 aa).

Residues 46-223 form the EngB-type G domain; the sequence is DVPEIAFVGR…AQHLWDWAHP (178 aa). GTP is bound by residues 54-61, 81-85, 103-106, 173-176, and 202-204; these read GRSNAGKS, GRTQS, DLPG, TKSD, and FSS. Mg(2+) is bound by residues S61 and T83. The tract at residues 219–245 is disordered; it reads DWAHPPEKPAKKPKAEPAAEAATGDEG. Over residues 222–235 the composition is skewed to basic and acidic residues; it reads HPPEKPAKKPKAEP. Positions 236 to 245 are enriched in low complexity; that stretch reads AAEAATGDEG.

The protein belongs to the TRAFAC class TrmE-Era-EngA-EngB-Septin-like GTPase superfamily. EngB GTPase family. Mg(2+) is required as a cofactor.

Its function is as follows. Necessary for normal cell division and for the maintenance of normal septation. This chain is Probable GTP-binding protein EngB, found in Polaromonas sp. (strain JS666 / ATCC BAA-500).